Reading from the N-terminus, the 424-residue chain is MLDLKRIRTNPEEIKKALTNRGEDFDISVIDELVSLDEERRKNLVEVENLKSKRNKDSGEIAKLKKSGQNADELLAEMKKISDDIKGIDAKVSEIDEKMQYIMLRIPNIPHPSVPEGKSDEENVEIRKWGEPRKFDFEFKAHWDIGTDLGLLDFERGGKVAGSRFTFYKGLGARLERAVINYFLDTHVEKHGYTEILPPYMVNRVSMTGTGQLPKFEEDAFKVDNGFFLIPTAEVPVTNMFRDEILKAEDLPYKFAAYSACFRSEAGSAGRDTRGLVRQHQFNKVELVKFAKPEESYDELEKLTHDAEEILQILNIPYRVVRICKGDLGFTAALKYDIEVWMPSYGRYVEISSCSNFEDFQARRANIKFRRDPKAKPEFVHTLNGSGLAVGRTVAAILENYQNEDGSVNVPEALKKYIGKDVIR.

Residue 232 to 234 (TAE) coordinates L-serine. 263-265 (RSE) contacts ATP. Position 286 (glutamate 286) interacts with L-serine. An ATP-binding site is contributed by 350–353 (EISS). Serine 386 is a binding site for L-serine.

The protein belongs to the class-II aminoacyl-tRNA synthetase family. Type-1 seryl-tRNA synthetase subfamily. Homodimer. The tRNA molecule binds across the dimer.

The protein localises to the cytoplasm. The catalysed reaction is tRNA(Ser) + L-serine + ATP = L-seryl-tRNA(Ser) + AMP + diphosphate + H(+). The enzyme catalyses tRNA(Sec) + L-serine + ATP = L-seryl-tRNA(Sec) + AMP + diphosphate + H(+). Its pathway is aminoacyl-tRNA biosynthesis; selenocysteinyl-tRNA(Sec) biosynthesis; L-seryl-tRNA(Sec) from L-serine and tRNA(Sec): step 1/1. In terms of biological role, catalyzes the attachment of serine to tRNA(Ser). Is also able to aminoacylate tRNA(Sec) with serine, to form the misacylated tRNA L-seryl-tRNA(Sec), which will be further converted into selenocysteinyl-tRNA(Sec). In Clostridium acetobutylicum (strain ATCC 824 / DSM 792 / JCM 1419 / IAM 19013 / LMG 5710 / NBRC 13948 / NRRL B-527 / VKM B-1787 / 2291 / W), this protein is Serine--tRNA ligase 1.